The primary structure comprises 255 residues: NAD kinase (255 aa).

The active-site Proton acceptor is the D44. NAD(+)-binding positions include 44–45 (DG), H49, 114–115 (NE), D144, A152, 155–160 (SAYNLS), and Q216.

The protein belongs to the NAD kinase family. The cofactor is a divalent metal cation.

The protein resides in the cytoplasm. The catalysed reaction is NAD(+) + ATP = ADP + NADP(+) + H(+). Its function is as follows. Involved in the regulation of the intracellular balance of NAD and NADP, and is a key enzyme in the biosynthesis of NADP. Catalyzes specifically the phosphorylation on 2'-hydroxyl of the adenosine moiety of NAD to yield NADP. This chain is NAD kinase, found in Rickettsia akari (strain Hartford).